Reading from the N-terminus, the 96-residue chain is MLFHVKMTVKLPVDMDPAKATQLKADEKELAQRLQREGTWRHLWRIAGHYANYSVFDVSSVEACNDTLMQLPLFPYMDIEVDGLCRHPSSIHSDDR.

Belongs to the muconolactone Delta-isomerase family. As to quaternary structure, homodecamer.

The enzyme catalyses (S)-muconolactone = (4,5-dihydro-5-oxofuran-2-yl)-acetate. Its pathway is aromatic compound metabolism; beta-ketoadipate pathway; 5-oxo-4,5-dihydro-2-furylacetate from catechol: step 3/3. In Pseudomonas putida (Arthrobacter siderocapsulatus), this protein is Muconolactone Delta-isomerase (catC).